Reading from the N-terminus, the 223-residue chain is Neurotrophic factor BDNF precursor form (223 aa).

The signal sequence occupies residues serine 1–alanine 5. Positions alanine 6–arginine 114 are excised as a propeptide. Asparagine 107 carries N-linked (GlcNAc...) asparagine glycosylation. Cystine bridges form between cysteine 127–cysteine 194 and cysteine 172–cysteine 223.

Belongs to the NGF-beta family.

The protein localises to the secreted. In terms of biological role, promotes the survival of neuronal populations that are all located either in the central nervous system or directly connected to it. The protein is Neurotrophic factor BDNF precursor form (BDNF) of Charina bottae (Northern rubber boa).